Consider the following 481-residue polypeptide: Argininosuccinate lyase (481 aa).

It belongs to the lyase 1 family. Argininosuccinate lyase subfamily.

The protein localises to the cytoplasm. The enzyme catalyses 2-(N(omega)-L-arginino)succinate = fumarate + L-arginine. It participates in amino-acid biosynthesis; L-arginine biosynthesis; L-arginine from L-ornithine and carbamoyl phosphate: step 3/3. This is Argininosuccinate lyase from Kineococcus radiotolerans (strain ATCC BAA-149 / DSM 14245 / SRS30216).